Reading from the N-terminus, the 571-residue chain is Proline--tRNA ligase (571 aa).

The protein belongs to the class-II aminoacyl-tRNA synthetase family. ProS type 1 subfamily. As to quaternary structure, homodimer.

The protein resides in the cytoplasm. It catalyses the reaction tRNA(Pro) + L-proline + ATP = L-prolyl-tRNA(Pro) + AMP + diphosphate. Catalyzes the attachment of proline to tRNA(Pro) in a two-step reaction: proline is first activated by ATP to form Pro-AMP and then transferred to the acceptor end of tRNA(Pro). As ProRS can inadvertently accommodate and process non-cognate amino acids such as alanine and cysteine, to avoid such errors it has two additional distinct editing activities against alanine. One activity is designated as 'pretransfer' editing and involves the tRNA(Pro)-independent hydrolysis of activated Ala-AMP. The other activity is designated 'posttransfer' editing and involves deacylation of mischarged Ala-tRNA(Pro). The misacylated Cys-tRNA(Pro) is not edited by ProRS. The sequence is that of Proline--tRNA ligase from Shewanella putrefaciens (strain CN-32 / ATCC BAA-453).